The following is a 372-amino-acid chain: 4-hydroxy-3-methylbut-2-en-1-yl diphosphate synthase (flavodoxin) (372 aa).

Positions 270, 273, 305, and 312 each coordinate [4Fe-4S] cluster.

Belongs to the IspG family. It depends on [4Fe-4S] cluster as a cofactor.

It carries out the reaction (2E)-4-hydroxy-3-methylbut-2-enyl diphosphate + oxidized [flavodoxin] + H2O + 2 H(+) = 2-C-methyl-D-erythritol 2,4-cyclic diphosphate + reduced [flavodoxin]. It participates in isoprenoid biosynthesis; isopentenyl diphosphate biosynthesis via DXP pathway; isopentenyl diphosphate from 1-deoxy-D-xylulose 5-phosphate: step 5/6. Converts 2C-methyl-D-erythritol 2,4-cyclodiphosphate (ME-2,4cPP) into 1-hydroxy-2-methyl-2-(E)-butenyl 4-diphosphate. This is 4-hydroxy-3-methylbut-2-en-1-yl diphosphate synthase (flavodoxin) from Citrobacter koseri (strain ATCC BAA-895 / CDC 4225-83 / SGSC4696).